A 699-amino-acid polypeptide reads, in one-letter code: Elongation factor G (699 aa).

The tr-type G domain maps to 8–288 (EDYRNFGIMA…AVVDYLPSPI (281 aa)). GTP is bound by residues 17 to 24 (AHIDAGKT), 86 to 90 (DTPGH), and 140 to 143 (NKMD).

This sequence belongs to the TRAFAC class translation factor GTPase superfamily. Classic translation factor GTPase family. EF-G/EF-2 subfamily.

It is found in the cytoplasm. In terms of biological role, catalyzes the GTP-dependent ribosomal translocation step during translation elongation. During this step, the ribosome changes from the pre-translocational (PRE) to the post-translocational (POST) state as the newly formed A-site-bound peptidyl-tRNA and P-site-bound deacylated tRNA move to the P and E sites, respectively. Catalyzes the coordinated movement of the two tRNA molecules, the mRNA and conformational changes in the ribosome. This chain is Elongation factor G, found in Sinorhizobium fredii (strain NBRC 101917 / NGR234).